Reading from the N-terminus, the 96-residue chain is Complement inhibitor RaCI4 (96 aa).

The signal sequence occupies residues 1–24 (MSAFNIFALVVVVCALMINECCTS). Cystine bridges form between Cys37-Cys61, Cys42-Cys63, and Cys57-Cys78.

The protein belongs to the RaCI family. In terms of tissue distribution, expressed in salivary glands.

It is found in the secreted. Complement inhibitor. Prevents complement-mediated C5 activation by binding to C5. Binds C5 at a different binding site than the other tick complement inhibitors OmCI and CirpT1, and the drug eculizumab. Inhibits complement in human and guinea pig but not in other species tested (rabbit, rat, mouse, and pig). This chain is Complement inhibitor RaCI4, found in Hyalomma rufipes (Tick).